The following is a 196-amino-acid chain: Adenylate kinase (196 aa).

9-17 (GIPGVGKST) provides a ligand contact to ATP.

It belongs to the archaeal adenylate kinase family.

It localises to the cytoplasm. The catalysed reaction is AMP + ATP = 2 ADP. This is Adenylate kinase from Thermococcus sibiricus (strain DSM 12597 / MM 739).